The chain runs to 263 residues: Palmitoyltransferase ZDHHC22 (263 aa).

Residues 1 to 9 (MLALRLLNV) are Cytoplasmic-facing. The chain crosses the membrane as a helical span at residues 10–30 (VAPAYFLCISLVTFVLQLFLF). Residues 31–48 (LPSMREDPAAARLFSPAL) are Lumenal-facing. A helical membrane pass occupies residues 49-69 (LHGALFLFLSANALGNYVLVI). The Cytoplasmic segment spans residues 70–125 (QNSPDDLGACQGASARKTPCPSPSTHFCRVCARVTLRHDHHCFFTGNCIGSRNMRN). A DHHC domain is found at 92-131 (PSTHFCRVCARVTLRHDHHCFFTGNCIGSRNMRNFVLFCL). Cys111 serves as the catalytic S-palmitoyl cysteine intermediate. Helical transmembrane passes span 126 to 146 (FVLF…AGVA) and 147 to 167 (YISA…TLLP). Residues 168-182 (TSISQFFSGAVLGSE) are Cytoplasmic-facing. A helical transmembrane segment spans residues 183–203 (MFVILMLYLWFAIGLACAGFC). Over 204 to 263 (CHQLLLILRGQTRHQVRKGVAVRARPWRKNLQEVFGKRWLLGLLVPMFNVGSESSKQQDK) the chain is Lumenal.

This sequence belongs to the DHHC palmitoyltransferase family. As to quaternary structure, interacts with CNN3. As to expression, widely expressed.

It localises to the endoplasmic reticulum membrane. The protein localises to the golgi apparatus membrane. It carries out the reaction L-cysteinyl-[protein] + hexadecanoyl-CoA = S-hexadecanoyl-L-cysteinyl-[protein] + CoA. In terms of biological role, palmitoyltransferase that could catalyze the addition of palmitate onto various protein substrates and be involved in a variety of cellular processes. Catalyzes the palmitoylation of KCNMA1, regulating localization of KCNMA1 to the plasma membrane. Might also mediate palmitoylation of CNN3. The chain is Palmitoyltransferase ZDHHC22 from Homo sapiens (Human).